A 491-amino-acid chain; its full sequence is MKLHTLVSCLHDFPVVPKENPEITSIEADSRKVKEGSLFVCMKGYTVDSHDFAKQAAAQGAAAIVAERPIDVDVPVVLVKNTFRSLAVLADYFYGQPTHKLHLIGITGTNGKTTTSHIMDEIMRAHGHKTGLIGTINMKIGDETFEVKNTTPDALTLQQTFSKMVEQGVDSTVMEVSSHALDLGRVHGCDYDVAVFTNLTQDHLDYHKTMEEYKHAKGLLFAQLGNSYNHNREKYAVLNSDDNVTEEYMRSTAATVVTYGIDTTSDIMAKNIVMTSGGTTFTLVTPYESVNVTMKLIGKFNVYNVLAATAAGLVSGVKLETIIAVIKDLAGVPGRFEVVDGGQNYTVIVDYAHTPDSLENVLKTAKQFAKGDVYCIVGCGGDRDRTKRPIMASVATKYATHAIYTSDNPRSEDPAAILDDMVHGASGKNYEMIIDRKEAIHHAIAKAKADDIIIIAGKGHETYQIIGKEVHHFDDREVAKEAITGRLNNEE.

Position 30 (serine 30) interacts with UDP-N-acetyl-alpha-D-muramoyl-L-alanyl-D-glutamate. 108–114 contributes to the ATP binding site; the sequence is GTNGKTT. UDP-N-acetyl-alpha-D-muramoyl-L-alanyl-D-glutamate contacts are provided by residues asparagine 149, 150–151, serine 177, and arginine 185; that span reads TT. At lysine 217 the chain carries N6-carboxylysine. Meso-2,6-diaminopimelate contacts are provided by residues arginine 383, 407 to 410, glycine 457, and glutamate 461; that span reads DNPR. The Meso-diaminopimelate recognition motif signature appears at 407-410; sequence DNPR.

This sequence belongs to the MurCDEF family. MurE subfamily. Requires Mg(2+) as cofactor. Carboxylation is probably crucial for Mg(2+) binding and, consequently, for the gamma-phosphate positioning of ATP.

It is found in the cytoplasm. The enzyme catalyses UDP-N-acetyl-alpha-D-muramoyl-L-alanyl-D-glutamate + meso-2,6-diaminopimelate + ATP = UDP-N-acetyl-alpha-D-muramoyl-L-alanyl-gamma-D-glutamyl-meso-2,6-diaminopimelate + ADP + phosphate + H(+). It participates in cell wall biogenesis; peptidoglycan biosynthesis. Functionally, catalyzes the addition of meso-diaminopimelic acid to the nucleotide precursor UDP-N-acetylmuramoyl-L-alanyl-D-glutamate (UMAG) in the biosynthesis of bacterial cell-wall peptidoglycan. The chain is UDP-N-acetylmuramoyl-L-alanyl-D-glutamate--2,6-diaminopimelate ligase from Bacillus cereus (strain ATCC 14579 / DSM 31 / CCUG 7414 / JCM 2152 / NBRC 15305 / NCIMB 9373 / NCTC 2599 / NRRL B-3711).